Reading from the N-terminus, the 537-residue chain is Protein swallow (537 aa).

The disordered stretch occupies residues 344–406 (QPNAGKPKKN…SESSHPSSND (63 aa)). Composition is skewed to low complexity over residues 371–383 (NGNG…HSSS) and 392–406 (AAPN…SSND).

May be constituted of a homo- or heterodimer.

The protein resides in the nucleus. In terms of biological role, has a role in localizing bicoid mRNA at the anterior margin of the oocyte during oogenesis, and a poorly characterized role in nuclear divisions in early embryogenesis. This chain is Protein swallow (swa), found in Drosophila pseudoobscura pseudoobscura (Fruit fly).